The sequence spans 281 residues: NADH--cytochrome b5 reductase 1 (281 aa).

The helical transmembrane segment at 13-33 (ILLGVFVAFVAVGAGAAYFLT) threads the bilayer. An AKR2A-binding sequence (ABS) required for mitochondrion outer membrane targeting motif is present at residues 34–40 (SSKKRRV). Residues 45 to 149 (ENFKEFKLVK…KGPKGRFKYQ (105 aa)) form the FAD-binding FR-type domain. FAD-binding positions include 129–144 (REMR…GPKG) and 155–187 (AFGM…KVHL). Residue threonine 166 is modified to Phosphothreonine.

This sequence belongs to the flavoprotein pyridine nucleotide cytochrome reductase family. As to quaternary structure, monomer. Interacts with AKR2A. It depends on FAD as a cofactor. Expressed in roots, stems, flowers and siliques. Detected in leaves.

Its subcellular location is the mitochondrion outer membrane. The catalysed reaction is 2 Fe(III)-[cytochrome b5] + NADH = 2 Fe(II)-[cytochrome b5] + NAD(+) + H(+). Its function is as follows. Reductase transferring electrons from NADH to cytochrome b5. Required for the NADH-dependent electron transfer involved in the desaturation and hydroxylation of fatty acids and in the desaturation of sterol precursors. No activity with NADPH as electron donor. The sequence is that of NADH--cytochrome b5 reductase 1 from Arabidopsis thaliana (Mouse-ear cress).